Consider the following 209-residue polypeptide: V-type ATP synthase subunit D (209 aa).

Belongs to the V-ATPase D subunit family.

Functionally, produces ATP from ADP in the presence of a proton gradient across the membrane. The sequence is that of V-type ATP synthase subunit D from Anaeromyxobacter dehalogenans (strain 2CP-C).